The chain runs to 437 residues: Methylenetetrahydrofolate--tRNA-(uracil-5-)-methyltransferase TrmFO (437 aa).

8 to 13 (GAGLAG) provides a ligand contact to FAD.

The protein belongs to the MnmG family. TrmFO subfamily. FAD is required as a cofactor.

Its subcellular location is the cytoplasm. It carries out the reaction uridine(54) in tRNA + (6R)-5,10-methylene-5,6,7,8-tetrahydrofolate + NADH + H(+) = 5-methyluridine(54) in tRNA + (6S)-5,6,7,8-tetrahydrofolate + NAD(+). The catalysed reaction is uridine(54) in tRNA + (6R)-5,10-methylene-5,6,7,8-tetrahydrofolate + NADPH + H(+) = 5-methyluridine(54) in tRNA + (6S)-5,6,7,8-tetrahydrofolate + NADP(+). Functionally, catalyzes the folate-dependent formation of 5-methyl-uridine at position 54 (M-5-U54) in all tRNAs. This Desulfitobacterium hafniense (strain Y51) protein is Methylenetetrahydrofolate--tRNA-(uracil-5-)-methyltransferase TrmFO.